The sequence spans 401 residues: Phosphoglycerate kinase (401 aa).

Substrate-binding positions include 24–26 (DFN), arginine 40, 63–66 (HFGR), arginine 122, and arginine 155. Residues lysine 206, glycine 297, glutamate 328, and 357-360 (GGDS) each bind ATP.

Belongs to the phosphoglycerate kinase family. As to quaternary structure, monomer.

The protein resides in the cytoplasm. It carries out the reaction (2R)-3-phosphoglycerate + ATP = (2R)-3-phospho-glyceroyl phosphate + ADP. The protein operates within carbohydrate degradation; glycolysis; pyruvate from D-glyceraldehyde 3-phosphate: step 2/5. The sequence is that of Phosphoglycerate kinase from Prochlorococcus marinus (strain NATL2A).